A 507-amino-acid chain; its full sequence is Archaeal-type glutamate synthase [NADPH] (507 aa).

4Fe-4S ferredoxin-type domains follow at residues 10-39 and 41-70; these read FVVERDDYKCIRCLACVRVCSYGANFYDEN and NRVYTENTKCVGCHFCEAICPTEAITVRKN. 8 residues coordinate [4Fe-4S] cluster: Cys-19, Cys-22, Cys-25, Cys-29, Cys-50, Cys-53, Cys-56, and Cys-60.

This sequence belongs to the glutamate synthase family. FMN serves as cofactor.

It catalyses the reaction 2 L-glutamate + NADP(+) = L-glutamine + 2-oxoglutarate + NADPH + H(+). The chain is Archaeal-type glutamate synthase [NADPH] from Thermotoga maritima (strain ATCC 43589 / DSM 3109 / JCM 10099 / NBRC 100826 / MSB8).